A 255-amino-acid chain; its full sequence is Triosephosphate isomerase (255 aa).

9–11 (NWK) serves as a coordination point for substrate. Catalysis depends on H95, which acts as the Electrophile. E167 (proton acceptor) is an active-site residue. Residues G173, S212, and 233 to 234 (GG) contribute to the substrate site.

This sequence belongs to the triosephosphate isomerase family. In terms of assembly, homodimer.

It localises to the cytoplasm. It carries out the reaction D-glyceraldehyde 3-phosphate = dihydroxyacetone phosphate. The protein operates within carbohydrate biosynthesis; gluconeogenesis. It participates in carbohydrate degradation; glycolysis; D-glyceraldehyde 3-phosphate from glycerone phosphate: step 1/1. Functionally, involved in the gluconeogenesis. Catalyzes stereospecifically the conversion of dihydroxyacetone phosphate (DHAP) to D-glyceraldehyde-3-phosphate (G3P). The protein is Triosephosphate isomerase of Pectobacterium atrosepticum (strain SCRI 1043 / ATCC BAA-672) (Erwinia carotovora subsp. atroseptica).